Consider the following 387-residue polypeptide: 3-hydroxyisobutyryl-CoA hydrolase-like protein 5 (387 aa).

Ala2 is subject to N-acetylalanine.

This sequence belongs to the enoyl-CoA hydratase/isomerase family.

The polypeptide is 3-hydroxyisobutyryl-CoA hydrolase-like protein 5 (Arabidopsis thaliana (Mouse-ear cress)).